The primary structure comprises 1144 residues: DNA polymerase III subunit alpha (1144 aa).

It belongs to the DNA polymerase type-C family. DnaE subfamily. DNA polymerase III contains a core (composed of alpha, epsilon and theta chains) that associates with a tau subunit. This core dimerizes to form the PolIII' complex. PolIII' associates with the gamma complex (composed of gamma, delta, delta', psi and chi chains) and with the beta chain to form the complete DNA polymerase III complex.

It localises to the cytoplasm. It carries out the reaction DNA(n) + a 2'-deoxyribonucleoside 5'-triphosphate = DNA(n+1) + diphosphate. Its function is as follows. DNA polymerase III is a complex, multichain enzyme responsible for most of the replicative synthesis in bacteria. This DNA polymerase also exhibits 3' to 5' exonuclease activity. The alpha chain is the DNA polymerase. The chain is DNA polymerase III subunit alpha (dnaE) from Neisseria meningitidis serogroup B (strain ATCC BAA-335 / MC58).